The primary structure comprises 125 residues: Large ribosomal subunit protein bL12 (125 aa).

Belongs to the bacterial ribosomal protein bL12 family. In terms of assembly, homodimer. Part of the ribosomal stalk of the 50S ribosomal subunit. Forms a multimeric L10(L12)X complex, where L10 forms an elongated spine to which 2 to 4 L12 dimers bind in a sequential fashion. Binds GTP-bound translation factors.

Forms part of the ribosomal stalk which helps the ribosome interact with GTP-bound translation factors. Is thus essential for accurate translation. In Chlorobium limicola (strain DSM 245 / NBRC 103803 / 6330), this protein is Large ribosomal subunit protein bL12.